Here is a 593-residue protein sequence, read N- to C-terminus: Maternal uncoordinated protein 2 (593 aa).

The protein belongs to the SCC4/mau-2 family. As to quaternary structure, may heterodimerize with scc-2/SCC2 to form the cohesin loading complex.

It is found in the nucleus. Its subcellular location is the nucleoplasm. It localises to the cytoplasm. Its function is as follows. Plays an important role in the loading of the cohesin complex on to DNA. Forms a heterodimeric complex (also known as cohesin loading complex) with scc-2/SCC2 which mediates the loading of the cohesin complex onto chromatin. Required for normal development until the fourth larval stage. Functions cell autonomously to guide migrations during the development of the nervous system. Participates in the guidance of mechanosensory neuron AVM by a slt-1-independent mechanism. Regulates chromosome segregation in early embryos. The protein is Maternal uncoordinated protein 2 of Caenorhabditis elegans.